The sequence spans 526 residues: Major facilitator superfamily domain-containing protein 4A (526 aa).

The next 12 helical transmembrane spans lie at 21 to 41 (LTYWSVFFSFGLCVAFLGPTI), 55 to 75 (ITLVFFSQQFFLFLGSTIGGF), 84 to 104 (LSSLAVSTLIISVVFAIIPLC), 107 to 127 (LLMLAFAMAVSGLAMGTIDTI), 142 to 162 (VFLQALHFFVGLGALVSPLIA), 215 to 235 (YAFWIMAIINLPVPIAIFVLV), 297 to 317 (LSFFGIHVLGGLVLFFSDGIV), 341 to 361 (GYLTCIFWAAITTGRLSAIPL), 377 to 397 (GVIVTVLLLLIFSNSSVFLFI), 401 to 421 (CLGLFISSIFPCMLALTEDIL), 430 to 450 (VLVTSAGMGEMVLQVLVGSVM), and 458 to 478 (FLLCGMIFGCLGFTFFTFLYF).

The protein belongs to the major facilitator superfamily.

It is found in the membrane. This chain is Major facilitator superfamily domain-containing protein 4A (mfsd4a), found in Danio rerio (Zebrafish).